Consider the following 202-residue polypeptide: Outer-membrane lipoprotein carrier protein (202 aa).

Residues 1 to 21 form the signal peptide; sequence MKRLLVACCFLSGLISASALA.

Belongs to the LolA family. Monomer.

It localises to the periplasm. Functionally, participates in the translocation of lipoproteins from the inner membrane to the outer membrane. Only forms a complex with a lipoprotein if the residue after the N-terminal Cys is not an aspartate (The Asp acts as a targeting signal to indicate that the lipoprotein should stay in the inner membrane). The sequence is that of Outer-membrane lipoprotein carrier protein from Yersinia pestis bv. Antiqua (strain Antiqua).